Reading from the N-terminus, the 503-residue chain is MSTTLGQESKTDWASLDSDEEVQRISDKVNQLNTSENKNEDQKATNLSDRLGPKITENVDAKSEQDKATNTIAEDANTKQSENDESNLIPNKNEVRVKLADLQADPNSPLFSVKSFEELELKPELLKGIYSMKFQKPSKIQEKALPLLLSNPPRNMIGQSQSGTGKTAAFALTMLSRVDASVPKPQAICLAPSRELARQIMDVVTEMGKYTEVKTAFGIKDSVPKGAKIDAQIVIGTPGTVMDLMKRRQLDARDIKVFVLDEADNMLDQQGLGDQSMRIKHLLPRNTQIVLFSATFSERVEKYAERFAPNANEIRLKTEELSVEGIKQLYMDCQSEEHKYNVLVELYGLLTIGQSIIFCKKKDTAEEIARRMTADGHTVACLTGNLEGAQRDAIMDSFRVGTSKVLVTTNVIARGIDVSQVNLVVNYDMPLDQAGRPDPQTYLHRIGRTGRFGRVGVSINFVHDKKSWEEMNAIQEYFQRPITRVPTDDYEELEKVVKNALKM.

Positions 1-69 (MSTTLGQESK…DAKSEQDKAT (69 aa)) are disordered. Residues 57–67 (ENVDAKSEQDK) show a composition bias toward basic and acidic residues. The Q motif signature appears at 114-142 (KSFEELELKPELLKGIYSMKFQKPSKIQE). The 168-residue stretch at 147–314 (LLLSNPPRNM…ERFAPNANEI (168 aa)) folds into the Helicase ATP-binding domain. 160–167 (SQSGTGKT) provides a ligand contact to ATP. The DEAD box motif lies at 261–264 (DEAD). In terms of domain architecture, Helicase C-terminal spans 325–493 (GIKQLYMDCQ…RVPTDDYEEL (169 aa)).

The protein belongs to the DEAD box helicase family. DDX19/DBP5 subfamily. Associates with the nuclear pore complex.

Its subcellular location is the cytoplasm. The protein localises to the nucleus. It localises to the nuclear pore complex. It is found in the nucleus membrane. It catalyses the reaction ATP + H2O = ADP + phosphate + H(+). Its function is as follows. ATP-dependent RNA helicase associated with the nuclear pore complex and essential for mRNA export from the nucleus. May participate in a terminal step of mRNA export through the removal of proteins that accompany mRNA through the nucleopore complex. May also be involved in early transcription. The polypeptide is ATP-dependent RNA helicase dbp5 (dbp5) (Schizosaccharomyces pombe (strain 972 / ATCC 24843) (Fission yeast)).